Reading from the N-terminus, the 135-residue chain is Probable histone H2A.7 (135 aa).

This sequence belongs to the histone H2A family. As to quaternary structure, the nucleosome is a histone octamer containing two molecules each of H2A, H2B, H3 and H4 assembled in one H3-H4 heterotetramer and two H2A-H2B heterodimers. The octamer wraps approximately 147 bp of DNA.

Its subcellular location is the nucleus. The protein localises to the chromosome. In terms of biological role, core component of nucleosome. Nucleosomes wrap and compact DNA into chromatin, limiting DNA accessibility to the cellular machineries which require DNA as a template. Histones thereby play a central role in transcription regulation, DNA repair, DNA replication and chromosomal stability. DNA accessibility is regulated via a complex set of post-translational modifications of histones, also called histone code, and nucleosome remodeling. In Oryza sativa subsp. indica (Rice), this protein is Probable histone H2A.7.